Reading from the N-terminus, the 509-residue chain is Monocarboxylate transporter 9 (509 aa).

The Cytoplasmic segment spans residues 1–12 (MELKKSPDGGWG). The next 12 membrane-spanning stretches (helical) occupy residues 13-33 (WVIV…PLAV), 53-73 (WVGS…SLCV), 80-100 (PVTI…SFAP), 102-122 (IYFL…LLYT), 137-157 (GLAL…YAAL), 164-184 (FYGL…ILAC), 305-325 (VFSA…PPSL), 342-362 (IMPL…LLGI), 372-392 (LYLY…IPFA), 398-418 (LALL…FPYV), 433-453 (GILM…VGWF), and 462-482 (IAFY…LLAA). At 483–509 (LPSWDTCNKQLPKPAPTTFLYKVASNV) the chain is on the cytoplasmic side.

The protein belongs to the major facilitator superfamily. Monocarboxylate porter (TC 2.A.1.13) family.

It localises to the cell membrane. The catalysed reaction is creatine(in) = creatine(out). It catalyses the reaction (R)-carnitine(in) = (R)-carnitine(out). Its function is as follows. Extracellular pH-and Na(+)-sensitive low-affinity creatine transporter. Also functions as a pH-independent carnitine efflux transporter. The polypeptide is Monocarboxylate transporter 9 (SLC16A9) (Pongo abelii (Sumatran orangutan)).